We begin with the raw amino-acid sequence, 176 residues long: Large ribosomal subunit protein uL10 (176 aa).

The protein belongs to the universal ribosomal protein uL10 family. In terms of assembly, part of the ribosomal stalk of the 50S ribosomal subunit. The N-terminus interacts with L11 and the large rRNA to form the base of the stalk. The C-terminus forms an elongated spine to which L12 dimers bind in a sequential fashion forming a multimeric L10(L12)X complex.

Functionally, forms part of the ribosomal stalk, playing a central role in the interaction of the ribosome with GTP-bound translation factors. This is Large ribosomal subunit protein uL10 from Marinobacter nauticus (strain ATCC 700491 / DSM 11845 / VT8) (Marinobacter aquaeolei).